The chain runs to 239 residues: UDP-2,3-diacylglucosamine hydrolase (239 aa).

The Mn(2+) site is built by Asp8, His10, Asp41, Asn78, and His113. 78 to 79 lines the substrate pocket; the sequence is NR. Substrate contacts are provided by Asp121, Ser159, Asn163, Lys166, and His194. Positions 194 and 196 each coordinate Mn(2+).

Belongs to the LpxH family. It depends on Mn(2+) as a cofactor.

Its subcellular location is the cell inner membrane. The enzyme catalyses UDP-2-N,3-O-bis[(3R)-3-hydroxytetradecanoyl]-alpha-D-glucosamine + H2O = 2-N,3-O-bis[(3R)-3-hydroxytetradecanoyl]-alpha-D-glucosaminyl 1-phosphate + UMP + 2 H(+). The protein operates within glycolipid biosynthesis; lipid IV(A) biosynthesis; lipid IV(A) from (3R)-3-hydroxytetradecanoyl-[acyl-carrier-protein] and UDP-N-acetyl-alpha-D-glucosamine: step 4/6. Its function is as follows. Hydrolyzes the pyrophosphate bond of UDP-2,3-diacylglucosamine to yield 2,3-diacylglucosamine 1-phosphate (lipid X) and UMP by catalyzing the attack of water at the alpha-P atom. Involved in the biosynthesis of lipid A, a phosphorylated glycolipid that anchors the lipopolysaccharide to the outer membrane of the cell. This Shewanella oneidensis (strain ATCC 700550 / JCM 31522 / CIP 106686 / LMG 19005 / NCIMB 14063 / MR-1) protein is UDP-2,3-diacylglucosamine hydrolase.